The primary structure comprises 382 residues: Anhydro-N-acetylmuramic acid kinase (382 aa).

9-16 (GTSLDGID) contributes to the ATP binding site.

It belongs to the anhydro-N-acetylmuramic acid kinase family.

It catalyses the reaction 1,6-anhydro-N-acetyl-beta-muramate + ATP + H2O = N-acetyl-D-muramate 6-phosphate + ADP + H(+). It participates in amino-sugar metabolism; 1,6-anhydro-N-acetylmuramate degradation. It functions in the pathway cell wall biogenesis; peptidoglycan recycling. Catalyzes the specific phosphorylation of 1,6-anhydro-N-acetylmuramic acid (anhMurNAc) with the simultaneous cleavage of the 1,6-anhydro ring, generating MurNAc-6-P. Is required for the utilization of anhMurNAc either imported from the medium or derived from its own cell wall murein, and thus plays a role in cell wall recycling. This chain is Anhydro-N-acetylmuramic acid kinase, found in Bacillus cereus (strain G9842).